Reading from the N-terminus, the 116-residue chain is HTH-type transcriptional regulator AnsR (116 aa).

Residues 6–60 form the HTH cro/C1-type domain; the sequence is LTELRKKKNWSLQYTADLLGIAKSTYAGYESGYRRPSLEALAMLADLFDTTCDEL. The segment at residues 17–36 is a DNA-binding region (H-T-H motif); sequence LQYTADLLGIAKSTYAGYES.

Functionally, transcriptional repressor for the ans operon coding for L-asparaginase and L-aspartase. NH4(+) may influence this repression. This Bacillus subtilis (strain 168) protein is HTH-type transcriptional regulator AnsR (ansR).